We begin with the raw amino-acid sequence, 228 residues long: HTH-type transcriptional regulator ArcR (228 aa).

An a nucleoside 3',5'-cyclic phosphate-binding site is contributed by 22-141 (SYINIPVGVL…VKLFSLLSET (120 aa)). Residues 155-228 (KLAKERVTKI…SKNWLVSKDL (74 aa)) enclose the HTH crp-type domain. The segment at residues 188 to 207 (IQLLSDMAGISRETTSHIIN) is a DNA-binding region (H-T-H motif).

It is found in the cytoplasm. Positively regulates the expression of the arcABDCR operon under anaerobic conditions, thus playing an essential role in arginine catabolism. May also control the expression of genes encoding proteins which are involved in anaerobic metabolism. Can bind cyclic AMP. The chain is HTH-type transcriptional regulator ArcR (arcR) from Staphylococcus epidermidis (strain ATCC 12228 / FDA PCI 1200).